The sequence spans 187 residues: ADP-ribosylation factor-like protein 9 (187 aa).

GTP-binding positions include 25-32 (GLDGAGKT), 69-73 (EIGGS), and 126-129 (NKQD).

It belongs to the small GTPase superfamily. Arf family.

The protein is ADP-ribosylation factor-like protein 9 (ARL9) of Homo sapiens (Human).